The chain runs to 137 residues: 6,7-dimethyl-8-ribityllumazine synthase (137 aa).

Residues phenylalanine 11, 43–45, and 67–69 contribute to the 5-amino-6-(D-ribitylamino)uracil site; these read SFD and CVI. 72 to 73 lines the (2S)-2-hydroxy-3-oxobutyl phosphate pocket; the sequence is DT. Histidine 75 serves as the catalytic Proton donor. Leucine 100 contributes to the 5-amino-6-(D-ribitylamino)uracil binding site. A (2S)-2-hydroxy-3-oxobutyl phosphate-binding site is contributed by arginine 115.

The protein belongs to the DMRL synthase family. As to quaternary structure, forms an icosahedral capsid composed of 60 subunits, arranged as a dodecamer of pentamers.

It carries out the reaction (2S)-2-hydroxy-3-oxobutyl phosphate + 5-amino-6-(D-ribitylamino)uracil = 6,7-dimethyl-8-(1-D-ribityl)lumazine + phosphate + 2 H2O + H(+). It functions in the pathway cofactor biosynthesis; riboflavin biosynthesis; riboflavin from 2-hydroxy-3-oxobutyl phosphate and 5-amino-6-(D-ribitylamino)uracil: step 1/2. Functionally, catalyzes the formation of 6,7-dimethyl-8-ribityllumazine by condensation of 5-amino-6-(D-ribitylamino)uracil with 3,4-dihydroxy-2-butanone 4-phosphate. This is the penultimate step in the biosynthesis of riboflavin. This chain is 6,7-dimethyl-8-ribityllumazine synthase, found in Methanococcus maripaludis (strain C6 / ATCC BAA-1332).